Consider the following 128-residue polypeptide: uncharacterized protein (128 aa).

Positions 18–116 (CPVETTLDII…WGEKYKDRID (99 aa)) constitute an HTH hxlR-type domain.

This is an uncharacterized protein from Bacillus subtilis (strain 168).